A 638-amino-acid polypeptide reads, in one-letter code: DNA gyrase subunit B (638 aa).

One can recognise a Toprim domain in the interval 423-537 (CEVYIVEGDS…KGHVYLAMPP (115 aa)). Mg(2+) is bound by residues Glu-429, Asp-502, and Asp-504.

It belongs to the type II topoisomerase GyrB family. As to quaternary structure, heterotetramer, composed of two GyrA and two GyrB chains. In the heterotetramer, GyrA contains the active site tyrosine that forms a transient covalent intermediate with DNA, while GyrB binds cofactors and catalyzes ATP hydrolysis. Mg(2+) is required as a cofactor. It depends on Mn(2+) as a cofactor. Ca(2+) serves as cofactor.

The protein localises to the cytoplasm. The enzyme catalyses ATP-dependent breakage, passage and rejoining of double-stranded DNA.. Its function is as follows. A type II topoisomerase that negatively supercoils closed circular double-stranded (ds) DNA in an ATP-dependent manner to modulate DNA topology and maintain chromosomes in an underwound state. Negative supercoiling favors strand separation, and DNA replication, transcription, recombination and repair, all of which involve strand separation. Also able to catalyze the interconversion of other topological isomers of dsDNA rings, including catenanes and knotted rings. Type II topoisomerases break and join 2 DNA strands simultaneously in an ATP-dependent manner. The polypeptide is DNA gyrase subunit B (Treponema denticola (strain ATCC 35405 / DSM 14222 / CIP 103919 / JCM 8153 / KCTC 15104)).